We begin with the raw amino-acid sequence, 124 residues long: Ribonuclease pancreatic (124 aa).

The segment covering 1–13 has biased composition (basic and acidic residues); that stretch reads KETAAAKFERQHM. The tract at residues 1–22 is disordered; sequence KETAAAKFERQHMDSSTSAASS. Substrate contacts are provided by Lys-7 and Arg-10. The active-site Proton acceptor is the His-12. 4 cysteine pairs are disulfide-bonded: Cys-26-Cys-84, Cys-40-Cys-95, Cys-58-Cys-110, and Cys-65-Cys-72. Asn-34 carries N-linked (GlcNAc...) asparagine glycosylation. Residues 41 to 45, Lys-66, and Arg-85 each bind substrate; that span reads KPVNT. His-119 functions as the Proton donor in the catalytic mechanism.

The protein belongs to the pancreatic ribonuclease family. Monomer. Interacts with and forms tight 1:1 complexes with RNH1. Dimerization of two such complexes may occur. Interaction with RNH1 inhibits this protein. Pancreas.

It localises to the secreted. The enzyme catalyses an [RNA] containing cytidine + H2O = an [RNA]-3'-cytidine-3'-phosphate + a 5'-hydroxy-ribonucleotide-3'-[RNA].. It catalyses the reaction an [RNA] containing uridine + H2O = an [RNA]-3'-uridine-3'-phosphate + a 5'-hydroxy-ribonucleotide-3'-[RNA].. Its function is as follows. Endonuclease that catalyzes the cleavage of RNA on the 3' side of pyrimidine nucleotides. Acts on single-stranded and double-stranded RNA. The chain is Ribonuclease pancreatic (RNASE1) from Bison bison (American bison).